We begin with the raw amino-acid sequence, 170 residues long: uncharacterized protein (170 aa).

A VOC domain is found at 25–151; sequence PALSPHLVVD…FGHHWSLGQP (127 aa).

This is an uncharacterized protein from Mycobacterium tuberculosis (strain CDC 1551 / Oshkosh).